Reading from the N-terminus, the 741-residue chain is Catalase-peroxidase (741 aa).

The segment at residues 86–208 is a cross-link (tryptophyl-tyrosyl-methioninium (Trp-Tyr) (with M-234)); sequence WHSAGSYRIF…FAATEMGLIY (123 aa). Residue His-87 is the Proton acceptor of the active site. A cross-link (tryptophyl-tyrosyl-methioninium (Tyr-Met) (with W-86)) is located at residues 208-234; sequence YVNPEGPGGNPDPLGSAQEIRVAFRRM. His-249 contacts heme b.

It belongs to the peroxidase family. Peroxidase/catalase subfamily. As to quaternary structure, homodimer or homotetramer. Requires heme b as cofactor. Formation of the three residue Trp-Tyr-Met cross-link is important for the catalase, but not the peroxidase activity of the enzyme.

It catalyses the reaction H2O2 + AH2 = A + 2 H2O. It carries out the reaction 2 H2O2 = O2 + 2 H2O. Its function is as follows. Bifunctional enzyme with both catalase and broad-spectrum peroxidase activity. Also displays NADH oxidase, INH lyase and isonicotinoyl-NAD synthase activities. This Archaeoglobus fulgidus (strain ATCC 49558 / DSM 4304 / JCM 9628 / NBRC 100126 / VC-16) protein is Catalase-peroxidase.